A 429-amino-acid chain; its full sequence is Enolase (429 aa).

Residue Gln-162 participates in (2R)-2-phosphoglycerate binding. Catalysis depends on Glu-204, which acts as the Proton donor. The Mg(2+) site is built by Asp-242, Glu-289, and Asp-316. (2R)-2-phosphoglycerate-binding residues include Lys-341, Arg-370, Ser-371, and Lys-392. The active-site Proton acceptor is the Lys-341.

It belongs to the enolase family. It depends on Mg(2+) as a cofactor.

It is found in the cytoplasm. The protein localises to the secreted. Its subcellular location is the cell surface. It catalyses the reaction (2R)-2-phosphoglycerate = phosphoenolpyruvate + H2O. It participates in carbohydrate degradation; glycolysis; pyruvate from D-glyceraldehyde 3-phosphate: step 4/5. Catalyzes the reversible conversion of 2-phosphoglycerate (2-PG) into phosphoenolpyruvate (PEP). It is essential for the degradation of carbohydrates via glycolysis. The protein is Enolase of Flavobacterium psychrophilum (strain ATCC 49511 / DSM 21280 / CIP 103535 / JIP02/86).